Here is a 74-residue protein sequence, read N- to C-terminus: Cytochrome c oxidase assembly factor 5 (74 aa).

The region spanning 27-65 (QSDCVLKEGKSPRQCLKEGNCKALKYSFFECKRSMLDAR) is the CHCH domain. Positions 30 to 41 (CVLKEGKSPRQC) match the Cx10C motif motif. Cystine bridges form between cysteine 30-cysteine 57 and cysteine 41-cysteine 47. Position 37 is a phosphoserine (serine 37). The Cx9C motif signature appears at 47–57 (CKALKYSFFEC).

This sequence belongs to the PET191 family.

Its function is as follows. Involved in an early step of the mitochondrial complex IV assembly process. This Bos taurus (Bovine) protein is Cytochrome c oxidase assembly factor 5 (COA5).